We begin with the raw amino-acid sequence, 589 residues long: C-type lectin domain family 4 member F (589 aa).

The Cytoplasmic segment spans residues 1 to 39 (MDGEAVRFCTDNQCVSLHPQEVDSVAMAPAAPKIPRLVQ). Residues 40-60 (ATPAFMAVTLVFSLVTLFVVV) form a helical; Signal-anchor for type II membrane protein membrane-spanning segment. Topologically, residues 61–589 (QQQTRPVPKP…TPPCPWILSN (529 aa)) are extracellular. Residues asparagine 79, asparagine 113, asparagine 207, asparagine 230, asparagine 244, asparagine 312, asparagine 385, and asparagine 399 are each glycosylated (N-linked (GlcNAc...) asparagine). Residues 476-589 (NGGSLYYFSS…TPPCPWILSN (114 aa)) enclose the C-type lectin domain.

It localises to the membrane. Its function is as follows. Receptor with an affinity for galactose and fucose. Could be involved in endocytosis. This is C-type lectin domain family 4 member F (CLEC4F) from Homo sapiens (Human).